An 81-amino-acid chain; its full sequence is MMFRLTSVWCLLVIVLLNSAVDGFIPCTGSEGYCHSHMWCCNSFDVCCELPGPATCTREEACETLRIALGRRAQYKRFFRR.

The N-terminal stretch at 1 to 23 (MMFRLTSVWCLLVIVLLNSAVDG) is a signal peptide. Disulfide bonds link cysteine 27–cysteine 41, cysteine 34–cysteine 48, cysteine 40–cysteine 56, and cysteine 47–cysteine 62. Leucine 69 is modified (leucine amide). A propeptide spanning residues 73–81 (AQYKRFFRR) is cleaved from the precursor.

The protein belongs to the conotoxin I2 superfamily. Expressed by the venom duct.

Its subcellular location is the secreted. The polypeptide is Conotoxin Eb11.3 (Conus eburneus (Ivory cone)).